Consider the following 543-residue polypeptide: Cytochrome P450 monooxygenase CYP1 (543 aa).

A helical membrane pass occupies residues 40 to 60 (SSFFTRILIAFIGLCLLSIFS). Asn-210 and Asn-367 each carry an N-linked (GlcNAc...) asparagine glycan. Residue Cys-478 participates in heme binding. A glycan (N-linked (GlcNAc...) asparagine) is linked at Asn-517.

This sequence belongs to the cytochrome P450 family. Heme serves as cofactor.

It is found in the membrane. Its pathway is secondary metabolite biosynthesis. Cytochrome P450 monooxygenase; part of the gene cluster that mediates the biosynthesis of a tyrosine-derived cytochalasan acting as a fungal signal recognized by resistant rice plants and leads to avirulence in Pi33 resistant rice cultivars. The first step in the pathway is catalyzed by the hybrid PKS-NRPS ACE1, assisted by the enoyl reductase RAP1, that are responsible for fusion of the tyrosine precursor and the polyketide backbone. The polyketide synthase module (PKS) of ACE1 is responsible for the synthesis of the polyketide backbone and the downstream nonribosomal peptide synthetase (NRPS) amidates the carboxyl end of the polyketide with the tyrosine precursor. Because ACE1 lacks a designated enoylreductase (ER) domain, the required activity is provided the enoyl reductase RAP1. Reduction by the hydrolyase ORFZ, followed by dehydration and intra-molecular Diels-Alder cyclization by the Diels-Alderase ORF3 then yield the required isoindolone-fused macrocycle. A number of oxidative steps catalyzed by the tailoring enzymes identified within the cluster, including cytochrome P450 monooxygenases CYP1 to CYP4, the FAD-linked oxidoreductase OXR2 and the short-chain dehydrogenase/reductase OXR1, are further required to afford the final cytochalasans that confer avirulence and which have still to be identified. The monooxygenase CYP1 has been shown to be a site-selective C-18 hydroxylase whereas the function of CYP3 is the site-selective epoxidation of the C-6/C-7 olefin that is present in some intermediate compounds. Finally, SYN2 and RAP2 are not required for avirulence in Pi33 resistant rice cultivars. This Pyricularia oryzae (strain 70-15 / ATCC MYA-4617 / FGSC 8958) (Rice blast fungus) protein is Cytochrome P450 monooxygenase CYP1.